The chain runs to 241 residues: Octanoyltransferase (241 aa).

The 190-residue stretch at Ala-38 to Leu-227 folds into the BPL/LPL catalytic domain. Residues Arg-85 to His-92, Ala-157 to Gly-159, and Gly-170 to Ala-172 each bind substrate. Cys-188 (acyl-thioester intermediate) is an active-site residue.

The protein belongs to the LipB family.

The protein resides in the cytoplasm. The catalysed reaction is octanoyl-[ACP] + L-lysyl-[protein] = N(6)-octanoyl-L-lysyl-[protein] + holo-[ACP] + H(+). It participates in protein modification; protein lipoylation via endogenous pathway; protein N(6)-(lipoyl)lysine from octanoyl-[acyl-carrier-protein]: step 1/2. Its function is as follows. Catalyzes the transfer of endogenously produced octanoic acid from octanoyl-acyl-carrier-protein onto the lipoyl domains of lipoate-dependent enzymes. Lipoyl-ACP can also act as a substrate although octanoyl-ACP is likely to be the physiological substrate. This is Octanoyltransferase from Mycobacterium ulcerans (strain Agy99).